Consider the following 493-residue polypeptide: Galactose-1-phosphate uridylyltransferase (493 aa).

Belongs to the galactose-1-phosphate uridylyltransferase type 2 family.

It localises to the cytoplasm. It catalyses the reaction alpha-D-galactose 1-phosphate + UDP-alpha-D-glucose = alpha-D-glucose 1-phosphate + UDP-alpha-D-galactose. The protein operates within carbohydrate metabolism; galactose metabolism. In Lactococcus lactis subsp. lactis (strain IL1403) (Streptococcus lactis), this protein is Galactose-1-phosphate uridylyltransferase (galT).